Reading from the N-terminus, the 341-residue chain is MILLENVKKIYKAKSGDVTAVDNANLKIDKGEIFGVIGYSGAGKSSLIRLFNQLEKPTSGQITIANRVISAITGSELRKARQEIGMIFQHFNLLWSRTVRENIEFPLEIAGVDKAKRRKRVDELIHLVGLEGRGDAYPSQLSGGQKQRVGIARALANNPQVLLCDEATSALDPETTDQILDLLLDINKRLGLTIVLITHEMHVIRKICNRVAVMEKGKIVETGPVLDVFRNPQQDITKRFVQQLTDSEDTNETIESLIEKYPDGKVIRLQFIGEAVERPVLQRLMQRSDIEVSILQGNIAQTNNGSYGSLVVHLNGEETAIQQAIEGIHQDQVELEVIAHG.

In terms of domain architecture, ABC transporter spans 2–241 (ILLENVKKIY…PQQDITKRFV (240 aa)). Position 38–45 (38–45 (GYSGAGKS)) interacts with ATP.

Belongs to the ABC transporter superfamily. Methionine importer (TC 3.A.1.24) family. In terms of assembly, the complex is composed of two ATP-binding proteins (MetN), two transmembrane proteins (MetI) and a solute-binding protein (MetQ).

The protein localises to the cell membrane. It carries out the reaction L-methionine(out) + ATP + H2O = L-methionine(in) + ADP + phosphate + H(+). It catalyses the reaction D-methionine(out) + ATP + H2O = D-methionine(in) + ADP + phosphate + H(+). Functionally, part of the ABC transporter complex MetNIQ involved in methionine import. Responsible for energy coupling to the transport system. The protein is Methionine import ATP-binding protein MetN 3 of Bacillus anthracis.